The sequence spans 678 residues: Catalase (678 aa).

Positions 1–26 (MSNEREMQNKKDQQLESFRVEDEGKK) are enriched in basic and acidic residues. The interval 1-32 (MSNEREMQNKKDQQLESFRVEDEGKKLTTNQG) is disordered. Catalysis depends on residues His75 and Asn148. Tyr362 is a binding site for heme.

This sequence belongs to the catalase family. HPII subfamily. The cofactor is heme.

The protein resides in the cytoplasm. The enzyme catalyses 2 H2O2 = O2 + 2 H2O. In terms of biological role, decomposes hydrogen peroxide into water and oxygen; serves to protect cells from the toxic effects of hydrogen peroxide. The sequence is that of Catalase (katE) from Alkalihalophilus pseudofirmus (strain ATCC BAA-2126 / JCM 17055 / OF4) (Bacillus pseudofirmus).